Here is a 114-residue protein sequence, read N- to C-terminus: MAVNLYDYANQLEQALRDSDEYKAIKDAFAKVKENEESKKLFDEFRETQMNFQQKQMQGEEIPEEDLQKAQEQAQAIEKDENISELMNAEQKMSQVFQEINQIIVKPLDEIYAD.

The protein belongs to the UPF0342 family.

This chain is UPF0342 protein SE_1526, found in Staphylococcus epidermidis (strain ATCC 12228 / FDA PCI 1200).